Here is a 305-residue protein sequence, read N- to C-terminus: Putative glutamine amidotransferase MTH_191 (305 aa).

The active site involves Cys-2. One can recognise a Glutamine amidotransferase type-2 domain in the interval 2–305 (CGIAGVVYKD…SPGEVRVYEI (304 aa)).

This Methanothermobacter thermautotrophicus (strain ATCC 29096 / DSM 1053 / JCM 10044 / NBRC 100330 / Delta H) (Methanobacterium thermoautotrophicum) protein is Putative glutamine amidotransferase MTH_191.